Consider the following 191-residue polypeptide: Fe/S biogenesis protein NfuA (191 aa).

Residues Cys-149 and Cys-152 each contribute to the [4Fe-4S] cluster site.

Belongs to the NfuA family. In terms of assembly, homodimer. Requires [4Fe-4S] cluster as cofactor.

Its function is as follows. Involved in iron-sulfur cluster biogenesis. Binds a 4Fe-4S cluster, can transfer this cluster to apoproteins, and thereby intervenes in the maturation of Fe/S proteins. Could also act as a scaffold/chaperone for damaged Fe/S proteins. The protein is Fe/S biogenesis protein NfuA of Salmonella paratyphi A (strain ATCC 9150 / SARB42).